Here is a 135-residue protein sequence, read N- to C-terminus: Large ribosomal subunit protein eL32 (135 aa).

Belongs to the eukaryotic ribosomal protein eL32 family.

This chain is Large ribosomal subunit protein eL32 (rpl32e), found in Methanococcus vannielii.